The sequence spans 495 residues: Cytochrome P450 monooxygenase cnsC (495 aa).

Cysteine 434 contacts heme.

Belongs to the cytochrome P450 family. Requires heme as cofactor.

It functions in the pathway alkaloid biosynthesis. Functionally, cytochrome P450 monooxygenase; part of the gene cluster that mediates the biosynthesis of communesins, a prominent class of indole alkaloids with great potential as pharmaceuticals. Communesins are biosynthesized by the coupling of tryptamine and aurantioclavine, two building blocks derived from L-tryptophan. The L-tryptophan decarboxylase cnsB converts L-tryptophan to tryptamine, whereas the tryptophan dimethylallyltransferase cnsF converts L-tryptophan to 4-dimethylallyl tryptophan which is further transformed to aurantioclavine by the aurantioclavine synthase cnsA, probably aided by the catalase cnsD. The cytochrome P450 monooxygenase cnsC catalyzes the heterodimeric coupling between the two different indole moieties, tryptamine and aurantioclavine, to construct vicinal quaternary stereocenters and yield the heptacyclic communesin scaffold. The O-methyltransferase cnsE then methylates the communesin scaffold to produce communesin K, the simplest characterized communesin that contains the heptacyclic core. The dioxygenase cnsJ converts communesin K into communesin I. Acylation to introduce the hexadienyl group at position N16 of communesin I by the acyltransferase cnsK leads to the production of communesin B. The hexadienyl group is produced by the highly reducing polyketide synthase cnsI, before being hydrolytically removed from cnsI by the serine hydrolase cnsH, converted into hexadienyl-CoA by the CoA ligase cnsG, and then transferred to communesin I by cnsK. Surprisingly, cnsK may also be a promiscuous acyltransferase that can tolerate a range of acyl groups, including acetyl-, propionyl-, and butyryl-CoA, which lead to communesins A, G and H respectively. The roles of the alpha-ketoglutarate-dependent dioxygenases cnsM and cnsP have still to be determined. In Penicillium expansum (Blue mold rot fungus), this protein is Cytochrome P450 monooxygenase cnsC.